Here is a 163-residue protein sequence, read N- to C-terminus: Large ribosomal subunit protein uL15 (163 aa).

Residues 1 to 29 (MSKKRRQRGSRTHGGGSHKNRRGAGHRGG) show a composition bias toward basic residues. Disordered regions lie at residues 1-59 (MSKK…KTRR) and 135-163 (VADGEAVLSERGEELEAEKDSTDEEDEES). Composition is skewed to basic and acidic residues over residues 33–46 (AGRDKHEFHNHEPL) and 142–154 (LSERGEELEAEKD).

The protein belongs to the universal ribosomal protein uL15 family. Part of the 50S ribosomal subunit.

Functionally, binds to the 23S rRNA. In Natronomonas pharaonis (strain ATCC 35678 / DSM 2160 / CIP 103997 / JCM 8858 / NBRC 14720 / NCIMB 2260 / Gabara) (Halobacterium pharaonis), this protein is Large ribosomal subunit protein uL15.